Here is a 346-residue protein sequence, read N- to C-terminus: Holliday junction branch migration complex subunit RuvB (346 aa).

Polar residues predominate over residues 1 to 11 (MTEQRTIASSA). Residues 1-20 (MTEQRTIASSATREDEAADA) are disordered. The segment at 1-183 (MTEQRTIASS…FGIVQRLEFY (183 aa)) is large ATPase domain (RuvB-L). ATP contacts are provided by residues Ile-22, Arg-23, Gly-64, Lys-67, Thr-68, Thr-69, 130–132 (EDF), Arg-173, Tyr-183, and Arg-220. Residue Thr-68 coordinates Mg(2+). Positions 184-254 (SPQELTRIVI…VAQAAMQMLK (71 aa)) are small ATPAse domain (RuvB-S). The head domain (RuvB-H) stretch occupies residues 257–346 (PEGFDELDRR…PAIGEPGDLF (90 aa)). Residues Arg-293, Arg-312, and Arg-317 each coordinate DNA.

This sequence belongs to the RuvB family. In terms of assembly, homohexamer. Forms an RuvA(8)-RuvB(12)-Holliday junction (HJ) complex. HJ DNA is sandwiched between 2 RuvA tetramers; dsDNA enters through RuvA and exits via RuvB. An RuvB hexamer assembles on each DNA strand where it exits the tetramer. Each RuvB hexamer is contacted by two RuvA subunits (via domain III) on 2 adjacent RuvB subunits; this complex drives branch migration. In the full resolvosome a probable DNA-RuvA(4)-RuvB(12)-RuvC(2) complex forms which resolves the HJ.

Its subcellular location is the cytoplasm. The enzyme catalyses ATP + H2O = ADP + phosphate + H(+). The RuvA-RuvB-RuvC complex processes Holliday junction (HJ) DNA during genetic recombination and DNA repair, while the RuvA-RuvB complex plays an important role in the rescue of blocked DNA replication forks via replication fork reversal (RFR). RuvA specifically binds to HJ cruciform DNA, conferring on it an open structure. The RuvB hexamer acts as an ATP-dependent pump, pulling dsDNA into and through the RuvAB complex. RuvB forms 2 homohexamers on either side of HJ DNA bound by 1 or 2 RuvA tetramers; 4 subunits per hexamer contact DNA at a time. Coordinated motions by a converter formed by DNA-disengaged RuvB subunits stimulates ATP hydrolysis and nucleotide exchange. Immobilization of the converter enables RuvB to convert the ATP-contained energy into a lever motion, pulling 2 nucleotides of DNA out of the RuvA tetramer per ATP hydrolyzed, thus driving DNA branch migration. The RuvB motors rotate together with the DNA substrate, which together with the progressing nucleotide cycle form the mechanistic basis for DNA recombination by continuous HJ branch migration. Branch migration allows RuvC to scan DNA until it finds its consensus sequence, where it cleaves and resolves cruciform DNA. The sequence is that of Holliday junction branch migration complex subunit RuvB from Xanthomonas campestris pv. campestris (strain ATCC 33913 / DSM 3586 / NCPPB 528 / LMG 568 / P 25).